The primary structure comprises 164 residues: MASHTADADAKPDSDSQKLLNVLPVSLRLRTRPWWFPIQEVSNPLVLYMEAWVAERVIGTDQAEISEIEWMCQALLTVDSVNSGNLAEITIFGQPSAQTRMKNILLNMAAWHKENELQRAVKVKEVEEFLKIRASSILSKLSKKGLKLAGFPLPLEGRETQMES.

Residues Pro-44–Leu-105 form the KH; atypical domain.

The protein belongs to the KHDC1 family. As to quaternary structure, component of the subcortical maternal complex (SCMC), at least composed of NLRP5, KHDC3, OOEP, and TLE6. Within the complex, interacts with NLRP5, KHDC3 and TLE6. The SCMC may facilitate translocation of its components between the nuclear and cytoplasmic compartments. As part of the SCMC interacts with the SCMC-associated protein NLRP4F. Forms a scaffold complex with KHDC3/FILIA, and interacts with BLM and TRIM25 at DNA replication forks. As to expression, expressed in ovaries, where it is restricted to growing oocytes, with greatest levels in fully grown oocytes.

The protein localises to the cytoplasm. It localises to the nucleus. In terms of biological role, component of the subcortical maternal complex (SCMC), a multiprotein complex that plays a key role in early embryonic development. The SCMC complex is a structural constituent of cytoplasmic lattices, which consist in fibrous structures found in the cytoplasm of oocytes and preimplantation embryos. They are required to store maternal proteins critical for embryonic development, such as proteins that control epigenetic reprogramming of the preimplantation embryo, and prevent their degradation or activation. As part of the OOEP-KHDC3 scaffold, recruits BLM and TRIM25 to DNA replication forks, thereby promoting the ubiquitination of BLM by TRIM25, enhancing BLM retainment at replication forks and therefore promoting stalled replication fork restart. Positively regulates the homologous recombination-mediated DNA double-strand break (DSB) repair pathway by regulating ATM activation and RAD51 recruitment to DSBs in oocytes. Thereby contributes to oocyte survival and the resumption and completion of meiosis. This Mus musculus (Mouse) protein is Oocyte-expressed protein homolog.